Reading from the N-terminus, the 4306-residue chain is Cytoplasmic dynein 2 heavy chain 1 (4306 aa).

The tract at residues 1 to 1650 (MAGSLSDVRK…YVQMVDSELQ (1650 aa)) is stem. Position 145-152 (145-152 (LGVVLRKS)) interacts with ATP. A coiled-coil region spans residues 669–696 (KELEGYIQKLQNAAERLATENRRLRKWH). AAA stretches follow at residues 1651-1875 (YTYE…VLRG), 1941-2161 (SALK…KQND), 2249-2505 (LTAD…WVLG), and 2617-2862 (HYGR…ESCK). ATP contacts are provided by residues 1689 to 1696 (GPAGTGKT), 1979 to 1986 (GPSGAGKS), 2291 to 2298 (GPEGCGKG), and 2655 to 2662 (GRSGVGRR). Residues 2880–3168 (AISSSKRKEL…AEVSKAQETI (289 aa)) form a stalk region. Coiled-coil stretches lie at residues 2896–2981 (LQAG…KEVQ), 3108–3199 (LETE…LATL), and 3407–3441 (IQHEKPDLEEQKTKLLQQEEDKKIQLARLEESLLE). 2 AAA regions span residues 3243 to 3472 (LCTE…LIQD) and 3689 to 3904 (MALF…VIDR).

This sequence belongs to the dynein heavy chain family. In terms of assembly, the cytoplasmic dynein complex 2 is probably composed by a heavy chain DYNC2H1 homodimer and a number of DYNC2LI1 light intermediate chains. As to expression, widely expressed both in ciliated and unciliated tissues. Detected in brain and testis (at protein level).

Its subcellular location is the cytoplasm. It is found in the cytoskeleton. The protein localises to the cilium axoneme. The protein resides in the cell membrane. May function as a motor for intraflagellar retrograde transport. Functions in cilia biogenesis. May play a role in transport between endoplasmic reticulum and Golgi or organization of the Golgi in cells. The chain is Cytoplasmic dynein 2 heavy chain 1 (Dync2h1) from Rattus norvegicus (Rat).